We begin with the raw amino-acid sequence, 187 residues long: MLPLYLLTNAKGQQMQIELKNGEIIQGILTNVDNWMNLTLSNVTEYSEESAINSEDNAESSKAVKLNEIYIRGTFIKFIKLQDNIIDKVKQQINSNNNSNSNGPGHKRYYNNRDSNNNRGNYNRRNNNNGNSNRRPYSQNRQYNNSNSSNINNSINSINSNNQNMNNGLGGSVQHHFNSSSPQKVEF.

In terms of domain architecture, Sm spans 2-85; the sequence is LPLYLLTNAK…IKFIKLQDNI (84 aa). The tract at residues 93–187 is disordered; it reads INSNNNSNSN…NSSSPQKVEF (95 aa). The segment covering 112 to 167 has biased composition (low complexity); sequence NRDSNNNRGNYNRRNNNNGNSNRRPYSQNRQYNNSNSSNINNSINSINSNNQNMNN. At arginine 119 the chain carries Omega-N-methylarginine. Residues 175-187 show a composition bias toward polar residues; sequence HHFNSSSPQKVEF. Residue serine 181 is modified to Phosphoserine.

It belongs to the snRNP Sm proteins family. As to quaternary structure, component of the heptameric LSM1-LSM7 complex that forms a seven-membered ring structure with a donut shape. The LSm subunits are arranged in the order LSM1, LSM2, LSM3, LSM6, LSM5, LSM7 and LSM4. Except for LSM1, where a C-terminal helix crosses the ring structure to form additional interactions with LSM3 and LSM6, each subunit interacts only with its two neighboring subunits. The LSM1-LSM7 complex interacts with PAT1; within the complex PAT1 has direct interactions with LSM2 and LSM3. The LSM1-LSM7 complex interacts with XRN1. Component of the heptameric LSM2-LSM8 complex that forms a seven-membered ring structure with a donut shape; an RNA strand can pass through the hole in the center of the ring structure. The LSm subunits are arranged in the order LSM8, LSM2, LSM3, LSM6, LSM5, LSM7 and LSM4. Component of the spliceosome U4/U6-U5 tri-snRNP complex composed of the U4, U6 and U5 snRNAs and at least PRP3, PRP4, PRP6, PRP8, PRP18, PRP31, PRP38, SNU13, SNU23, SNU66, SNU114, SPP381, SMB1, SMD1, SMD2, SMD3, SMX2, SMX3, LSM2, LSM3, LSM4, LSM5, LSM6, LSM7, LSM8, BRR2 and DIB1. May be found in a complex comprising LSM2-LSM7 without LSM1 or LSM8; the complex associates with pre-P RNA and snoRNA SNR5.

The protein resides in the nucleus. Its subcellular location is the cytoplasm. Functionally, component of LSm protein complexes, which are involved in RNA processing and may function in a chaperone-like manner. Component of the cytoplasmic LSM1-LSM7 complex which is involved in mRNA degradation by activating the decapping step. Together with PAT1, the LSM1-LSM7 complex binds to osmotic stress-activated mRNAs to attenuate the osmotic stress response, probably by limiting ribosome access to the mRNA and consequently translation. Component of the nuclear LSM2-LSM8 complex, which is involved in spliceosome assembly. The LSM2-LSM8 complex plays a role in the biogenesis of the spliceosomal U4/U6-U5 tri-snRNP complex by accelerating PRP24-mediated annealing of U4/U6 di-snRNA. The LSM2-LSM8 complex binds U6 snRNA terminating with a non-cyclic 3' phosphate group. LSM2-LSM8 is probably also involved in degradation of nuclear pre-mRNA by targeting them for decapping. LSM2-LSM8 could be involved in processing of pre-tRNAs, pre-rRNAs and U3 snoRNA, although involvement may be indirect. In a complex that probably contains LSM2-LSM7, but not LSM1 or LSM8, associates with the precursor of the RNA component of RNase P (pre-P RNA) and may be involved in maturing pre-P RNA; the complex also associates with snoRNA SNR5. The sequence is that of LSM complex subunit LSM4 from Saccharomyces cerevisiae (strain ATCC 204508 / S288c) (Baker's yeast).